The sequence spans 238 residues: Phosphatidylcholine synthase (238 aa).

Over 1–16 the chain is Cytoplasmic; that stretch reads MPVNLSMTPINKAKAW. A helical transmembrane segment spans residues 17-37; it reads GVHAVTASGVILALLALLALV. Residues 38–41 lie on the Periplasmic side of the membrane; that stretch reads DNKP. A helical transmembrane segment spans residues 42–62; the sequence is QACLLWLGLALLVDGLDGTLA. At 63 to 75 the chain is on the cytoplasmic side; the sequence is RKYEVKEMLPHFD. The chain crosses the membrane as a helical span at residues 76 to 96; sequence GSVLDLVIDYLTYVFIPAIFI. Topologically, residues 97–104 are periplasmic; that stretch reads YRYIPLPE. The helical transmembrane segment at 105-125 threads the bilayer; that stretch reads HFELLAVGVILVSSLFCFCNV. Residues 126-132 are Cytoplasmic-facing; sequence NMKSTDN. The helical transmembrane segment at 133–153 threads the bilayer; the sequence is YFVGFPAAWNVVAVYFYVLDL. Over 154–155 the chain is Periplasmic; that stretch reads HP. Residues 156–176 traverse the membrane as a helical segment; sequence WVNLATVLVLAALTLTRMKFL. The Cytoplasmic segment spans residues 177–183; it reads HPFRVRQ. Residues 184 to 204 traverse the membrane as a helical segment; it reads FMPLNIAVTFVWLISSGLLIV. The Periplasmic segment spans residues 205-209; the sequence is QQPAD. The helical transmembrane segment at 210 to 230 threads the bilayer; sequence LPILLGLWFAASAYFVGICLW. At 231-238 the chain is on the cytoplasmic side; that stretch reads RSAREWFG.

Belongs to the CDP-alcohol phosphatidyltransferase class-I family. It depends on Mn(2+) as a cofactor.

Its subcellular location is the cell inner membrane. The catalysed reaction is a CDP-1,2-diacyl-sn-glycerol + choline = a 1,2-diacyl-sn-glycero-3-phosphocholine + CMP + H(+). In terms of biological role, condenses choline with CDP-diglyceride to produce phosphatidylcholine and CMP. This Pseudomonas aeruginosa (strain ATCC 15692 / DSM 22644 / CIP 104116 / JCM 14847 / LMG 12228 / 1C / PRS 101 / PAO1) protein is Phosphatidylcholine synthase.